Reading from the N-terminus, the 811-residue chain is Probable disease resistance protein At5g04720 (811 aa).

The 147-residue stretch at 1-147 (MADIIGGEVV…KVDSLNEKLG (147 aa)) folds into the RPW8 domain. NB-ARC domains lie at 180-242 (VGLD…VSQS) and 312-437 (TYDV…NVLV). 207–214 (GMSGSGKT) contacts ATP. 5 LRR repeats span residues 650–674 (FPKLSDLTIDHCDDLLELPSTICGI), 676–699 (SLNSISITNCPRIKELPKNLSKLK), 700–722 (ALQLLRLYACHELNSLPVEICEL), 724–746 (RLKYVDISQCVSLSSLPEKIGKV), and 748–769 (TLEKIDTRECSLSSIPNSVVLL).

This sequence belongs to the disease resistance NB-LRR family.

In terms of biological role, probable disease resistance protein. This Arabidopsis thaliana (Mouse-ear cress) protein is Probable disease resistance protein At5g04720.